The following is a 385-amino-acid chain: Cytochrome b (385 aa).

A run of 4 helical transmembrane segments spans residues 32–52 (FGALAAFCLGIQIVTGIFLAM), 76–98 (WLIRYIHANGASFFFICVYIHVF), 113–133 (LWNLGVTILIVMILTAFLGYV), and 179–199 (FFSLHYLLPFVIALLSLIHVA). Heme b is bound by residues H82 and H96. Residues H183 and H197 each coordinate heme b. Residue H202 participates in a ubiquinone binding. The next 4 membrane-spanning stretches (helical) occupy residues 226–246 (FIFKDLLGIIFFLIVFCYAVF), 290–310 (LGGVITLGLALIVLFLLPFIT), 322–342 (SKTILFWSFFSVCVLLGWIGF), and 349–369 (YLMLGQMLTVLYFFYFFSLAV).

This sequence belongs to the cytochrome b family. The main subunits of complex b-c1 are: cytochrome b, cytochrome c1 and the Rieske protein. It depends on heme b as a cofactor.

It is found in the mitochondrion inner membrane. Functionally, component of the ubiquinol-cytochrome c reductase complex (complex III or cytochrome b-c1 complex) that is part of the mitochondrial respiratory chain. The b-c1 complex mediates electron transfer from ubiquinol to cytochrome c. Contributes to the generation of a proton gradient across the mitochondrial membrane that is then used for ATP synthesis. The chain is Cytochrome b (MT-CYB) from Acanthamoeba castellanii (Amoeba).